Consider the following 688-residue polypeptide: Beta-galactosidase BglY (688 aa).

Residue R118 coordinates substrate. A Zn(2+)-binding site is contributed by C122. A substrate-binding site is contributed by N156. E157 functions as the Proton donor in the catalytic mechanism. Residues C162, C164, and C167 each coordinate Zn(2+). Catalysis depends on E313, which acts as the Nucleophile. Substrate is bound by residues W321 and 361-364 (EKFH).

Belongs to the glycosyl hydrolase 42 family.

The enzyme catalyses Hydrolysis of terminal non-reducing beta-D-galactose residues in beta-D-galactosides.. Ca(2+), Mg(2+) and EDTA have little effect on enzyme activity at 1-10 mM. Zn(2+) at 3, 5, 7 or 10 mM inhibits activity by 20%, 30%, 40% and 65%, respectively. Its function is as follows. Hydrolyzes o-nitrophenyl-beta-D-galactopyranoside (ONPG) and p-nitrophenyl-beta-D-fucopyranoside (PNPF), but not p-nitrophenyl-beta-D-glucopyranoside (PNPG), p-nitrophenyl-beta-D-xylopyranoside (PNPX) or p-nitrophenyl-beta-D-arabinopyranoside (PNPA). Also hydrolyzes lactose, including lactose in milk. The protein is Beta-galactosidase BglY (bglY) of Alicyclobacillus acidocaldarius subsp. acidocaldarius (strain ATCC 27009 / DSM 446 / BCRC 14685 / JCM 5260 / KCTC 1825 / NBRC 15652 / NCIMB 11725 / NRRL B-14509 / 104-IA) (Bacillus acidocaldarius).